Reading from the N-terminus, the 562-residue chain is Arginine--tRNA ligase (562 aa).

The 'HIGH' region motif lies at Ala-130 to His-140.

It belongs to the class-I aminoacyl-tRNA synthetase family. Monomer.

The protein resides in the cytoplasm. The enzyme catalyses tRNA(Arg) + L-arginine + ATP = L-arginyl-tRNA(Arg) + AMP + diphosphate. The chain is Arginine--tRNA ligase from Geobacter metallireducens (strain ATCC 53774 / DSM 7210 / GS-15).